Consider the following 158-residue polypeptide: SUMO-conjugating enzyme UBC9 (158 aa).

A UBC core domain is found at 4-157 (IALSRLAQER…VRAQAKKFAP (154 aa)). Residues 13–18 (RKAWRK) are interaction with SUMO1. Catalysis depends on cysteine 93, which acts as the Glycyl thioester intermediate.

Belongs to the ubiquitin-conjugating enzyme family. Interacts with SOX9.

Its subcellular location is the nucleus. It is found in the cytoplasm. Its pathway is protein modification; protein sumoylation. Functionally, accepts the ubiquitin-like proteins SUMO1, SUMO2 and SUMO3 from the UBLE1A-UBLE1B E1 complex and catalyzes their covalent attachment to other proteins with the help of an E3 ligase such as RANBP2 or CBX4. Essential for nuclear architecture and chromosome segregation. The chain is SUMO-conjugating enzyme UBC9 (UBE2I) from Gallus gallus (Chicken).